A 239-amino-acid polypeptide reads, in one-letter code: 3-dehydroquinate dehydratase (239 aa).

3-dehydroquinate contacts are provided by residues 35 to 37 and Arg70; that span reads ELR. His133 (proton donor/acceptor) is an active-site residue. The Schiff-base intermediate with substrate role is filled by Lys160. The 3-dehydroquinate site is built by Arg202 and Gln225.

The protein belongs to the type-I 3-dehydroquinase family. As to quaternary structure, homodimer.

The catalysed reaction is 3-dehydroquinate = 3-dehydroshikimate + H2O. It functions in the pathway metabolic intermediate biosynthesis; chorismate biosynthesis; chorismate from D-erythrose 4-phosphate and phosphoenolpyruvate: step 3/7. Functionally, involved in the third step of the chorismate pathway, which leads to the biosynthesis of aromatic amino acids. Catalyzes the cis-dehydration of 3-dehydroquinate (DHQ) and introduces the first double bond of the aromatic ring to yield 3-dehydroshikimate. The sequence is that of 3-dehydroquinate dehydratase from Staphylococcus saprophyticus subsp. saprophyticus (strain ATCC 15305 / DSM 20229 / NCIMB 8711 / NCTC 7292 / S-41).